We begin with the raw amino-acid sequence, 214 residues long: NADH-ubiquinone oxidoreductase chain 5 (214 aa).

4 helical membrane passes run 14-34 (LNTWALLLTLMATAFTATYSI), 58-78 (PLITAPLTRLALGSITAGMII), 92-112 (MPLITKTAAILMTILGIILAL), and 192-212 (TGLIKAYLGSFALSILVMILM).

Belongs to the complex I subunit 5 family.

It localises to the mitochondrion inner membrane. It catalyses the reaction a ubiquinone + NADH + 5 H(+)(in) = a ubiquinol + NAD(+) + 4 H(+)(out). Functionally, core subunit of the mitochondrial membrane respiratory chain NADH dehydrogenase (Complex I) that is believed to belong to the minimal assembly required for catalysis. Complex I functions in the transfer of electrons from NADH to the respiratory chain. The immediate electron acceptor for the enzyme is believed to be ubiquinone. In Anser caerulescens (Snow goose), this protein is NADH-ubiquinone oxidoreductase chain 5 (MT-ND5).